A 1068-amino-acid chain; its full sequence is Leucine zipper protein 1 (1068 aa).

Residue A2 is modified to N-acetylalanine. Positions 11 to 354 (ASNRHLRFKL…KLQVRKQKEL (344 aa)) form a coiled coil. Disordered stretches follow at residues 251–292 (LSSK…VKDL), 375–402 (TKLK…KRER), and 432–558 (AAKA…QAVE). Basic and acidic residues predominate over residues 254–292 (KESKRKGSLDYLKQVENETRDKSENEKNRNQEDNKVKDL). Phosphoserine occurs at positions 256, 261, 395, 513, 571, 575, 612, and 660. The segment covering 510-519 (RTFSDSTHVS) has biased composition (polar residues). Positions 677 to 700 (TTITPEPEPKPQPNSREKVKSRGG) are disordered. Residue T680 is modified to Phosphothreonine. 2 positions are modified to phosphoserine: S691 and S746. A disordered region spans residues 782-829 (QKSTSKSVTSKVTSSITIYPSDSSGPRAVPSEAPRERHTSTSNIQVGP). The span at 785-796 (TSKSVTSKVTSS) shows a compositional bias: low complexity. The interval 834-884 (AISNHVSSPLELSIHKHDITLQLTEAERVGDGSPKNRAEMVVSRSSILIKP) is required for interaction with FLNA. The residue at position 906 (S906) is a Phosphoserine. The disordered stretch occupies residues 924-945 (RDLKCSEDPPTGIGRNMEATNA). T952 carries the post-translational modification Phosphothreonine. Disordered regions lie at residues 959–995 (QPRS…ASEV) and 1033–1068 (NPLE…AEED). Positions 984 to 994 (RRTQSSLTASE) are enriched in polar residues. S988 carries the phosphoserine modification.

In terms of assembly, component of the CERF-1 ISWI chromatin remodeling complex (also called the CECR2-containing remodeling factor (CERF) complex) at least composed of CECR2 and SMARCA1. Component of the CERF-5 ISWI chromatin remodeling complex at least composed of CECR2 and SMARCA5/SNF2H. LUZP1 is detected as part of the CERF-1 and CERF-5 complexes in embryonic stem (ES) cells where it is involved in complex stabilization but is not detected in the complexes in the testis. Interacts (via C-terminus) with LIMA1/EPLIN; both proteins restrict ciliation and may work together to regulate this process. Interacts with myosin light chain MYL9; the interaction results in inhibition of phosphorylation of MYL9 by DAPK3. Interacts with DAPK3; the interaction is likely to occur throughout the cell cycle and reduces the LUZP1-mediated suppression of MYL9 phosphorylation. Interacts with the chromosomal passenger complex (CPC); CPC kinase activity is required for localization of LUZP1 to the centromere. As to expression, predominantly expressed in the brain (at protein level).

It localises to the cytoplasm. Its subcellular location is the cytoskeleton. It is found in the microtubule organizing center. The protein localises to the centrosome. The protein resides in the cilium basal body. It localises to the midbody. Its subcellular location is the chromosome. It is found in the centromere. The protein localises to the spindle. The protein resides in the stress fiber. It localises to the nucleus. Its subcellular location is the cell projection. It is found in the dendrite. The protein localises to the perikaryon. The protein resides in the cell junction. It localises to the tight junction. Functionally, F-actin cross-linking protein. Stabilizes actin and acts as a negative regulator of primary cilium formation. Positively regulates the phosphorylation of both myosin II and protein phosphatase 1 regulatory subunit PPP1R12A/MYPT1 and promotes the assembly of myosin II stacks within actin stress fibers. Inhibits the phosphorylation of myosin light chain MYL9 by DAPK3 and suppresses the constriction velocity of the contractile ring during cytokinesis. Binds to microtubules and promotes epithelial cell apical constriction by up-regulating levels of diphosphorylated myosin light chain (MLC) through microtubule-dependent inhibition of MLC dephosphorylation by myosin phosphatase. Involved in regulation of cell migration, nuclear size and centriole number, probably through regulation of the actin cytoskeleton. Component of the CERF-1 and CERF-5 chromatin remodeling complexes in embryonic stem cells where it acts to stabilize the complexes. Plays a role in embryonic brain and cardiovascular development. This is Leucine zipper protein 1 (Luzp1) from Mus musculus (Mouse).